The chain runs to 318 residues: Thymidylate synthase (318 aa).

Residues R25 and 180–181 each bind dUMP; that span reads RR. The active-site Nucleophile is the C200. DUMP-binding positions include 220 to 223, N231, and 261 to 263; these read RSGD and HIY. D223 serves as a coordination point for (6R)-5,10-methylene-5,6,7,8-tetrahydrofolate. A317 contributes to the (6R)-5,10-methylene-5,6,7,8-tetrahydrofolate binding site.

It belongs to the thymidylate synthase family. Bacterial-type ThyA subfamily. In terms of assembly, homodimer.

It localises to the cytoplasm. It carries out the reaction dUMP + (6R)-5,10-methylene-5,6,7,8-tetrahydrofolate = 7,8-dihydrofolate + dTMP. It functions in the pathway pyrimidine metabolism; dTTP biosynthesis. In terms of biological role, catalyzes the reductive methylation of 2'-deoxyuridine-5'-monophosphate (dUMP) to 2'-deoxythymidine-5'-monophosphate (dTMP) while utilizing 5,10-methylenetetrahydrofolate (mTHF) as the methyl donor and reductant in the reaction, yielding dihydrofolate (DHF) as a by-product. This enzymatic reaction provides an intracellular de novo source of dTMP, an essential precursor for DNA biosynthesis. The polypeptide is Thymidylate synthase (Lactobacillus johnsonii (strain CNCM I-12250 / La1 / NCC 533)).